The following is a 148-amino-acid chain: uncharacterized protein (148 aa).

It localises to the plastid. The protein localises to the chloroplast. This is an uncharacterized protein from Porphyra purpurea (Red seaweed).